Reading from the N-terminus, the 511-residue chain is Ribonuclease Y (511 aa).

A helical membrane pass occupies residues 3 to 23 (VTIVASIACFIVGGILSYVLF). A KH domain is found at 201–261 (SVTVFHIESD…VRREIARLAL (61 aa)). Residues 327-420 (LLQHARETAN…VQVCDAISGA (94 aa)) form the HD domain.

The protein belongs to the RNase Y family.

It localises to the cell membrane. Its function is as follows. Endoribonuclease that initiates mRNA decay. This chain is Ribonuclease Y, found in Bacteroides fragilis (strain ATCC 25285 / DSM 2151 / CCUG 4856 / JCM 11019 / LMG 10263 / NCTC 9343 / Onslow / VPI 2553 / EN-2).